A 462-amino-acid polypeptide reads, in one-letter code: Cysteine--tRNA ligase (462 aa).

Cysteine 28 provides a ligand contact to Zn(2+). Residues 30–40 (MTVYDYCHLGH) carry the 'HIGH' region motif. The Zn(2+) site is built by cysteine 209, histidine 234, and glutamate 238. The 'KMSKS' region motif lies at 266–270 (KMAKS). Position 269 (lysine 269) interacts with ATP.

Belongs to the class-I aminoacyl-tRNA synthetase family. In terms of assembly, monomer. Requires Zn(2+) as cofactor.

It is found in the cytoplasm. The enzyme catalyses tRNA(Cys) + L-cysteine + ATP = L-cysteinyl-tRNA(Cys) + AMP + diphosphate. In Alkalilimnicola ehrlichii (strain ATCC BAA-1101 / DSM 17681 / MLHE-1), this protein is Cysteine--tRNA ligase.